Consider the following 1034-residue polypeptide: Condensin complex subunit 3 (1034 aa).

HEAT repeat units lie at residues 95 to 132 (SPVN…NLPE), 139 to 176 (DLFD…PSDP), 178 to 213 (CPVS…SLPK), 242 to 279 (LTIA…QYSE), 281 to 317 (DVLD…LVQN), 439 to 476 (TSLI…PIVT), and 618 to 655 (DFAR…LFGM). The segment covering 663-672 (TNPDDSQCKA) has biased composition (polar residues). The segment at 663-693 (TNPDDSQCKAQENADEDISEQEKPGSVDENL) is disordered. 3 HEAT repeats span residues 703–740 (ATVN…SGRL), 785–823 (CFAE…DLTR), and 878–915 (ENST…SGRE). A compositionally biased stretch (basic and acidic residues) spans 909–949 (QLRSGREEHRVSKETEPQVSKETEDRTNLQENEEGKQKDEA). Positions 909-1034 (QLRSGREEHR…LSKLLNEEAN (126 aa)) are disordered. Residues 964–984 (RGKATKGRRKGPAAAATRRKA) are compositionally biased toward basic residues. A compositionally biased stretch (basic and acidic residues) spans 985-999 (SKAEEAEAEMERQEE).

The protein belongs to the CND3 (condensin subunit 3) family. As to quaternary structure, component of the condensin complex, which contains the XCAP-E/SMC2 and XCAP-C/SMC4 heterodimer, and three non SMC subunits that probably regulate the complex: XCAP-H/NCAPH, XCAP-D2/NCAPD2 and XCAP-G/NCAPG. In terms of processing, phosphorylated by cdk1. Its phosphorylation, as well as that of XCAP-D2 and XCAP-H subunits, activates the condensin complex and is required for chromosome condensation.

It is found in the nucleus. The protein localises to the cytoplasm. Its subcellular location is the chromosome. Functionally, regulatory subunit of the condensin complex, a complex required for conversion of interphase chromatin into mitotic-like condense chromosomes. The condensin complex probably introduces positive supercoils into relaxed DNA in the presence of type I topoisomerases and converts nicked DNA into positive knotted forms in the presence of type II topoisomerase. This Xenopus laevis (African clawed frog) protein is Condensin complex subunit 3 (ncapg).